We begin with the raw amino-acid sequence, 445 residues long: Sterile alpha motif domain-containing protein 7 (445 aa).

The tract at residues 98–172 (HAARAEMEMY…HLQGNPILLA (75 aa)) is required for localization to nuclear polycomb bodies. Positions 193–282 (YQKPPESDTE…WDDGKGKPSE (90 aa)) are disordered. Over residues 227–244 (IKDPDIEVDNQQKPRVAD) the composition is skewed to basic and acidic residues. The 55-residue stretch at 324 to 378 (WTVDDVYNFIRSLPGCSDYAQVFKDHAIDGETLPLLTEQHLRGTMGLKLGPALKI) folds into the SAM domain. Positions 425 to 445 (SIPGPQDLLSPKRTEQDVMRN) are disordered. The span at 434–445 (SPKRTEQDVMRN) shows a compositional bias: basic and acidic residues.

In terms of assembly, monomer, homodimer and homooligomer. Component of a Polycomb group (PcG) multiprotein PRC1-like complex. Interacts with PHC2 and NR2E3. Interacts with RNF1 in a PHC2-dependent manner. Interacts with SAMD11. Expressed in the retina and the pineal gland. In the retina, it is predominantly expressed in the outer nuclear layer and developing rod photoreceptors.

The protein localises to the nucleus. It is found in the cytoplasm. Component of a Polycomb group (PcG) multiprotein PRC1-like complex, essential for establishing rod photoreceptor cell identity and function by silencing nonrod gene expression in developing rod photoreceptor cells. Via its association with the PRC1-like complex, promotes epigenetic repressive marks H3K27me3 and H2AK119ub marks in nonrod genes, silencing their transcription. Represses Crx-controlled photoreceptor-specific gene expression. The polypeptide is Sterile alpha motif domain-containing protein 7 (Samd7) (Mus musculus (Mouse)).